We begin with the raw amino-acid sequence, 441 residues long: uncharacterized protein (441 aa).

This sequence belongs to the outer membrane factor (OMF) (TC 1.B.17) family.

This is an uncharacterized protein from Haemophilus influenzae (strain ATCC 51907 / DSM 11121 / KW20 / Rd).